The chain runs to 618 residues: 2-succinyl-5-enolpyruvyl-6-hydroxy-3-cyclohexene-1-carboxylate synthase (618 aa).

The tract at residues 192–215 is disordered; sequence DPVAERGRDGPYVDVTPGSPEPGD.

It belongs to the TPP enzyme family. MenD subfamily. Homodimer. Requires Mg(2+) as cofactor. The cofactor is Mn(2+). It depends on thiamine diphosphate as a cofactor.

It catalyses the reaction isochorismate + 2-oxoglutarate + H(+) = 5-enolpyruvoyl-6-hydroxy-2-succinyl-cyclohex-3-ene-1-carboxylate + CO2. It participates in quinol/quinone metabolism; 1,4-dihydroxy-2-naphthoate biosynthesis; 1,4-dihydroxy-2-naphthoate from chorismate: step 2/7. Its pathway is quinol/quinone metabolism; menaquinone biosynthesis. Its function is as follows. Catalyzes the thiamine diphosphate-dependent decarboxylation of 2-oxoglutarate and the subsequent addition of the resulting succinic semialdehyde-thiamine pyrophosphate anion to isochorismate to yield 2-succinyl-5-enolpyruvyl-6-hydroxy-3-cyclohexene-1-carboxylate (SEPHCHC). This Halorubrum lacusprofundi (strain ATCC 49239 / DSM 5036 / JCM 8891 / ACAM 34) protein is 2-succinyl-5-enolpyruvyl-6-hydroxy-3-cyclohexene-1-carboxylate synthase.